The chain runs to 121 residues: Homeobox protein HD-6 (121 aa).

Positions 28-87 (PKRSRIQLHDWQSMLLEHSFRMNPYPDRIEKYNLFLKTKIPMKNVKIWFQNRRAREKSFY) form a DNA-binding region, homeobox.

It localises to the nucleus. The protein is Homeobox protein HD-6 (HD-6) of Encephalitozoon cuniculi (strain GB-M1) (Microsporidian parasite).